Consider the following 758-residue polypeptide: 5-methyltetrahydropteroyltriglutamate--homocysteine methyltransferase (758 aa).

5-methyltetrahydropteroyltri-L-glutamate is bound by residues Arg-17 to Lys-20 and Lys-113. L-homocysteine contacts are provided by residues Ile-433–Ser-435 and Glu-486. Residues Ile-433–Ser-435 and Glu-486 each bind L-methionine. 5-methyltetrahydropteroyltri-L-glutamate-binding positions include Arg-517–Cys-518 and Trp-563. Residue Asp-601 participates in L-homocysteine binding. Asp-601 serves as a coordination point for L-methionine. Glu-607 provides a ligand contact to 5-methyltetrahydropteroyltri-L-glutamate. 3 residues coordinate Zn(2+): His-643, Cys-645, and Glu-667. Catalysis depends on His-696, which acts as the Proton donor. Zn(2+) is bound at residue Cys-728.

It belongs to the vitamin-B12 independent methionine synthase family. Zn(2+) is required as a cofactor.

It catalyses the reaction 5-methyltetrahydropteroyltri-L-glutamate + L-homocysteine = tetrahydropteroyltri-L-glutamate + L-methionine. The protein operates within amino-acid biosynthesis; L-methionine biosynthesis via de novo pathway; L-methionine from L-homocysteine (MetE route): step 1/1. Its function is as follows. Catalyzes the transfer of a methyl group from 5-methyltetrahydrofolate to homocysteine resulting in methionine formation. This is 5-methyltetrahydropteroyltriglutamate--homocysteine methyltransferase from Nitrosomonas europaea (strain ATCC 19718 / CIP 103999 / KCTC 2705 / NBRC 14298).